The following is a 259-amino-acid chain: Thiazole synthase (259 aa).

The active-site Schiff-base intermediate with DXP is Lys99. Residues Gly160, 186 to 187 (AG), and 208 to 209 (NT) contribute to the 1-deoxy-D-xylulose 5-phosphate site.

Belongs to the ThiG family. Homotetramer. Forms heterodimers with either ThiH or ThiS.

The protein localises to the cytoplasm. The enzyme catalyses [ThiS sulfur-carrier protein]-C-terminal-Gly-aminoethanethioate + 2-iminoacetate + 1-deoxy-D-xylulose 5-phosphate = [ThiS sulfur-carrier protein]-C-terminal Gly-Gly + 2-[(2R,5Z)-2-carboxy-4-methylthiazol-5(2H)-ylidene]ethyl phosphate + 2 H2O + H(+). It participates in cofactor biosynthesis; thiamine diphosphate biosynthesis. Functionally, catalyzes the rearrangement of 1-deoxy-D-xylulose 5-phosphate (DXP) to produce the thiazole phosphate moiety of thiamine. Sulfur is provided by the thiocarboxylate moiety of the carrier protein ThiS. In vitro, sulfur can be provided by H(2)S. In Porphyromonas gingivalis (strain ATCC 33277 / DSM 20709 / CIP 103683 / JCM 12257 / NCTC 11834 / 2561), this protein is Thiazole synthase.